A 466-amino-acid chain; its full sequence is Heat stress transcription factor A-5 (466 aa).

A DNA-binding region spans residues 21–115; sequence PAPFLVKTYE…LLKNIHRRKP (95 aa). The hydrophobic repeat HR-A/B stretch occupies residues 125 to 191; that stretch reads SSTDQERAVL…KLLNFLETAI (67 aa). The Bipartite nuclear localization signal signature appears at 198–217; the sequence is KNFGKKVEQLDISAYNKKRR. 3 disordered regions span residues 215-248, 272-300, and 422-466; these read KRRL…GNIF, HSIQ…LTKR, and TERP…QLTL. Over residues 218 to 233 the composition is skewed to basic and acidic residues; that stretch reads LPEVEQSKPPSEDSHL. The short motif at 414–423 is the AHA element; it reads DVFWEQFLTE. Composition is skewed to polar residues over residues 425–438 and 455–466; these read PGSS…STYR and LRNTKNIEQLTL. A Nuclear export signal motif is present at residues 461 to 466; the sequence is IEQLTL.

This sequence belongs to the HSF family. Class A subfamily. As to quaternary structure, homotrimer. In terms of processing, exhibits temperature-dependent phosphorylation.

The protein resides in the cytoplasm. It localises to the nucleus. Its function is as follows. Transcriptional activator that specifically binds DNA sequence 5'-AGAAnnTTCT-3' known as heat shock promoter elements (HSE). This Arabidopsis thaliana (Mouse-ear cress) protein is Heat stress transcription factor A-5 (HSFA5).